Consider the following 604-residue polypeptide: Protein CBFA2T1 (604 aa).

Residues Thr-32–Leu-114 form a disordered region. Residue Ser-41 is modified to Phosphoserine. Polar residues predominate over residues Gln-63–Ala-86. The span at Asn-95 to Leu-114 shows a compositional bias: low complexity. In terms of domain architecture, TAFH spans Ala-120–Glu-215. A disordered region spans residues Ser-230–Gln-298. The span at Glu-238–Ser-264 shows a compositional bias: basic and acidic residues. Polar residues predominate over residues Ser-271–Gln-285. Residues Leu-289 to Gln-298 show a composition bias toward pro residues. The important for oligomerization stretch occupies residues Gln-337–Glu-383. Residues Gln-337–Glu-383 form a nervy homology region 2 (NHR2) region. The interval Asp-401–Pro-423 is disordered. The residue at position 417 (Ser-417) is a Phosphoserine. Residues Glu-443–Glu-492 are nervy homology region 3 (NHR3). Positions 515, 518, 526, 529, 535, 539, 547, and 551 each coordinate Zn(2+). The segment at Cys-515–Cys-551 adopts an MYND-type zinc-finger fold. Residues Ala-557–Ala-576 are compositionally biased toward polar residues. The disordered stretch occupies residues Ala-557–Arg-604. Positions Thr-587–Arg-604 are enriched in low complexity.

The protein belongs to the CBFA2T family. In terms of assembly, homooligomer. Homotetramerization is mediated by nervy homology region 2 (NRH2). Can interact with CBFA2T2 and CBFA2T3; heterotetramerization between members of the CBFA2T family is proposed. Interacts with TCF12, SIN3A, HDAC1, HDAC2, HDAC3, NCOR1, NCOR2. Interacts with ATN1 (via its N-terminus); the interaction enhances the transcriptional repression. Interacts (via its N-terminus) with ZBTB16; the interaction increases the transcription repression activity of ZBTB16. AML1-MTG8/ETO fusion protein interacts with CBFB. AML1-MTG8/ETO is part of a stable transcription factor complex AETFC in leukemic cells; AETFC formation seems to be involved in recruitment of EP300. AML1-MTG8/ETO nervy homology region 2-mediated oligomerization is proposed to be homotypic, required for AML1-MTG8/ETO-mediated transformation of primary hematopoietic cells and is required for AML1-MTG8/ETO interaction with TCF12. Most abundantly expressed in brain. Lower levels in lung, heart, testis and ovary.

The protein resides in the nucleus. In terms of biological role, transcriptional corepressor which facilitates transcriptional repression via its association with DNA-binding transcription factors and recruitment of other corepressors and histone-modifying enzymes. Can repress the expression of MMP7 in a ZBTB33-dependent manner. Can repress transactivation mediated by TCF12. Acts as a negative regulator of adipogenesis. The AML1-MTG8/ETO fusion protein frequently found in leukemic cells is involved in leukemogenesis and contributes to hematopoietic stem/progenitor cell self-renewal. The sequence is that of Protein CBFA2T1 (RUNX1T1) from Homo sapiens (Human).